Reading from the N-terminus, the 221-residue chain is Germin-like protein 5-1 (221 aa).

The N-terminal stretch at 1 to 25 (MARPSLPCAVVAVLLLALLPTPSTA) is a signal peptide. A disulfide bond links Cys35 and Cys50. The region spanning 62–210 (KGLAAAGNTN…AFQVGTKEVE (149 aa)) is the Cupin type-1 domain. Asn71 carries an N-linked (GlcNAc...) asparagine glycan. The Mn(2+) site is built by His110, His112, Glu117, and His156.

This sequence belongs to the germin family. In terms of assembly, oligomer (believed to be a pentamer but probably hexamer).

Its subcellular location is the secreted. The protein localises to the extracellular space. It is found in the apoplast. Its function is as follows. May play a role in plant defense. Probably has no oxalate oxidase activity even if the active site is conserved. The polypeptide is Germin-like protein 5-1 (Oryza sativa subsp. japonica (Rice)).